A 293-amino-acid polypeptide reads, in one-letter code: Elongation factor Ts (293 aa).

The tract at residues 81–84 (TDFV) is involved in Mg(2+) ion dislocation from EF-Tu.

The protein belongs to the EF-Ts family.

The protein localises to the cytoplasm. Functionally, associates with the EF-Tu.GDP complex and induces the exchange of GDP to GTP. It remains bound to the aminoacyl-tRNA.EF-Tu.GTP complex up to the GTP hydrolysis stage on the ribosome. This chain is Elongation factor Ts, found in Teredinibacter turnerae (strain ATCC 39867 / T7901).